The chain runs to 143 residues: Transcriptional regulator MraZ (143 aa).

SpoVT-AbrB domains follow at residues 5 to 47 and 76 to 119; these read TYTP…PRAE and TDEQ…DAQA.

This sequence belongs to the MraZ family. In terms of assembly, forms oligomers.

Its subcellular location is the cytoplasm. The protein resides in the nucleoid. This is Transcriptional regulator MraZ from Mycobacterium avium (strain 104).